Here is a 644-residue protein sequence, read N- to C-terminus: Core protein VP4 (644 aa).

It belongs to the orbivirus VP4 family.

The protein resides in the virion. The VP4 protein is one of the five proteins (with VP1, VP3, VP6 and VP7) which form the inner capsid of the virus. The chain is Core protein VP4 (Segment-4) from Bluetongue virus 13 (isolate USA) (BTV 13).